Reading from the N-terminus, the 28-residue chain is 50 kDa venom protease (28 aa).

This sequence belongs to the venom metalloproteinase (M12B) family. It depends on Zn(2+) as a cofactor. In terms of tissue distribution, expressed by the venom gland.

It localises to the secreted. The sequence is that of 50 kDa venom protease from Proatheris superciliaris (Lowland swamp viper).